A 180-amino-acid chain; its full sequence is GTP cyclohydrolase 1 (180 aa).

Residues Cys71, His74, and Cys142 each contribute to the Zn(2+) site.

This sequence belongs to the GTP cyclohydrolase I family. As to quaternary structure, toroid-shaped homodecamer, composed of two pentamers of five dimers.

The enzyme catalyses GTP + H2O = 7,8-dihydroneopterin 3'-triphosphate + formate + H(+). It participates in cofactor biosynthesis; 7,8-dihydroneopterin triphosphate biosynthesis; 7,8-dihydroneopterin triphosphate from GTP: step 1/1. The polypeptide is GTP cyclohydrolase 1 (folE) (Helicobacter pylori (strain J99 / ATCC 700824) (Campylobacter pylori J99)).